The sequence spans 174 residues: UPF0398 protein LACR_0544 (174 aa).

It belongs to the UPF0398 family.

The sequence is that of UPF0398 protein LACR_0544 from Lactococcus lactis subsp. cremoris (strain SK11).